The sequence spans 170 residues: Protein SprT (170 aa).

Residues 23–164 (QLARQHFSVE…CRQCGDKLKF (142 aa)) enclose the SprT-like domain. Residue His78 participates in Zn(2+) binding. The active site involves Glu79. His82 contributes to the Zn(2+) binding site.

It belongs to the SprT family. Zn(2+) is required as a cofactor.

The protein localises to the cytoplasm. This is Protein SprT from Serratia proteamaculans (strain 568).